We begin with the raw amino-acid sequence, 407 residues long: Polygalacturonase (407 aa).

The first 26 residues, 1 to 26 (MAPHLNIVPSMFVLLLLFISASKVQS), serve as a signal peptide directing secretion. PbH1 repeat units follow at residues 180–206 (CKNITLERLKIEAPDESPNTDGIHMGK) and 207–228 (SEGVNIIASDIKTGDDCISIGD). An N-linked (GlcNAc...) asparagine glycan is attached at N182. The active-site Proton donor is D221. The cysteines at positions 223 and 240 are disulfide-linked. The active site involves H244. 2 PbH1 repeats span residues 260–281 (VEGIKISNCTITNTSNGARIKT) and 290–311 (VSEIHFEDITMNNVSSPILIDQ). Residues N267, N272, N302, and N331 are each glycosylated (N-linked (GlcNAc...) asparagine). Disulfide bonds link C351-C357 and C379-C395. A PbH1 5 repeat occupies 357 to 384 (CQNVELADIDIKHNGAEPATSQCLNVKP).

Belongs to the glycosyl hydrolase 28 family. In terms of tissue distribution, pollen.

Its subcellular location is the secreted. It localises to the cell wall. The enzyme catalyses (1,4-alpha-D-galacturonosyl)n+m + H2O = (1,4-alpha-D-galacturonosyl)n + (1,4-alpha-D-galacturonosyl)m.. Functionally, may function in the depolymerization of the pectin in its walls during pollen tube elongation, or in that of the pistil during pollination. In Gossypium hirsutum (Upland cotton), this protein is Polygalacturonase (G9).